Here is a 452-residue protein sequence, read N- to C-terminus: Enolase (452 aa).

(2R)-2-phosphoglycerate is bound at residue Gln167. The Proton donor role is filled by Glu209. Mg(2+) is bound by residues Asp250, Glu307, and Asp334. (2R)-2-phosphoglycerate is bound by residues Lys359, Arg388, Ser389, and Lys410. Catalysis depends on Lys359, which acts as the Proton acceptor.

Belongs to the enolase family. Requires Mg(2+) as cofactor.

It is found in the cytoplasm. It localises to the secreted. The protein localises to the cell surface. It catalyses the reaction (2R)-2-phosphoglycerate = phosphoenolpyruvate + H2O. It functions in the pathway carbohydrate degradation; glycolysis; pyruvate from D-glyceraldehyde 3-phosphate: step 4/5. In terms of biological role, catalyzes the reversible conversion of 2-phosphoglycerate (2-PG) into phosphoenolpyruvate (PEP). It is essential for the degradation of carbohydrates via glycolysis. The polypeptide is Enolase (Mesomycoplasma hyopneumoniae (strain 7448) (Mycoplasma hyopneumoniae)).